Consider the following 949-residue polypeptide: Translation initiation factor IF-2 (949 aa).

2 disordered regions span residues 50-206 (FTEK…GAAR) and 220-359 (QNAE…TERK). Basic and acidic residues-rich tracts occupy residues 52–84 (EKPK…KVEK) and 104–143 (FKAE…DQGS). 2 stretches are compositionally biased toward polar residues: residues 144–154 (KNRNFNKSQGQ) and 164–180 (GSQQ…SNKP). Over residues 187–206 (NAANRNQNNSQQERQVGAAR) the composition is skewed to low complexity. Basic and acidic residues predominate over residues 224 to 275 (YMRHKETQLREQEEARRLAERAKEEARLAAQKAAEEKAKEAEKAAKTERFEP). The span at 319-336 (KSWNNQNQVRNQRNSNWN) shows a compositional bias: low complexity. Residues 450–619 (ERAPVVTIMG…LLVAEVEELK (170 aa)) enclose the tr-type G domain. The G1 stretch occupies residues 459–466 (GHVDHGKT). 459–466 (GHVDHGKT) lines the GTP pocket. The segment at 484–488 (GITQH) is G2. The G3 stretch occupies residues 505–508 (DTPG). GTP-binding positions include 505 to 509 (DTPGH) and 559 to 562 (NKID). The tract at residues 559–562 (NKID) is G4. The interval 595 to 597 (SAK) is G5.

This sequence belongs to the TRAFAC class translation factor GTPase superfamily. Classic translation factor GTPase family. IF-2 subfamily.

It localises to the cytoplasm. Its function is as follows. One of the essential components for the initiation of protein synthesis. Protects formylmethionyl-tRNA from spontaneous hydrolysis and promotes its binding to the 30S ribosomal subunits. Also involved in the hydrolysis of GTP during the formation of the 70S ribosomal complex. This is Translation initiation factor IF-2 from Streptococcus uberis (strain ATCC BAA-854 / 0140J).